A 358-amino-acid polypeptide reads, in one-letter code: Protein ttm-2 (358 aa).

This sequence belongs to the arrestin family.

Functionally, involved in resistance to B.thuringiensis pore-forming toxin Cry5B downstream of the sek-1 and pmk-1 MAPK kinase pathway. The chain is Protein ttm-2 from Caenorhabditis elegans.